Consider the following 452-residue polypeptide: Cobyrinate a,c-diamide synthase (452 aa).

In terms of domain architecture, GATase cobBQ-type spans 248–441; the sequence is RVAYALDAAF…LHIHFYQNLA (194 aa). Cysteine 330 serves as the catalytic Nucleophile.

This sequence belongs to the CobB/CbiA family. Mg(2+) is required as a cofactor.

The enzyme catalyses cob(II)yrinate + 2 L-glutamine + 2 ATP + 2 H2O = cob(II)yrinate a,c diamide + 2 L-glutamate + 2 ADP + 2 phosphate + 2 H(+). Its pathway is cofactor biosynthesis; adenosylcobalamin biosynthesis; cob(II)yrinate a,c-diamide from sirohydrochlorin (anaerobic route): step 10/10. Its function is as follows. Catalyzes the ATP-dependent amidation of the two carboxylate groups at positions a and c of cobyrinate, using either L-glutamine or ammonia as the nitrogen source. The chain is Cobyrinate a,c-diamide synthase from Listeria monocytogenes serovar 1/2a (strain ATCC BAA-679 / EGD-e).